Here is a 503-residue protein sequence, read N- to C-terminus: MEYMAESTDRSPGHILCCECGVPISPNPANICVACLRSKVDISQGIPKQVSISFCKQCQRYFQPPGTWIQCALESRELLALCLKKIKAPLSKVRLVDAGFVWTEPHSKRLKVKLTIQKEVMNGAILQQVFVVDYVVQSQMCGDCHRVEAKDFWKAVIQVRQKTLHKKTFYYLEQLILKYGMHQNTLRIKEIHDGLDFYYSSKQHAQKMVEFLQCTVPCRYKASQRLISQDIHSNTYNYKSTFSVEIVPICKDNVVCLSPKLAQSLGNMNQICVCIRVTSAIHLIDPNTLQVADIDGSTFWSHPFNSLCHPKQLEEFIVMECSIVQDIKRAAGAGMISKKHTLGEVWVQKTSEMNTDKQYFCRTHLGHLLNPGDLVLGFDLANCNLNDEHVNKMNSDRVPDVVLIKKSYDRTKRQRRRNWKLKELARERENMDTDDERQYQDFLEDLEEDEAIRKNVNIYRDSAIPVESDTDDEGAPRISLAEMLEDLHISQDATGEEGASMLT.

Met1 is subject to N-acetylmethionine. Ser258 bears the Phosphoserine mark. The short motif at 405-422 (KKSYDRTKRQRRRNWKLK) is the Nuclear and nucleolar localization signal element. The necessary for the nuclear export of the 60S ribosomal subunit stretch occupies residues 425–503 (ARERENMDTD…TGEEGASMLT (79 aa)). Position 433 is a phosphothreonine (Thr433). Ser468 is subject to Phosphoserine. The residue at position 470 (Thr470) is a Phosphothreonine. The short motif at 480–489 (LAEMLEDLHI) is the Nuclear export signal element.

The protein belongs to the NMD3 family. Found in a 60S ribosomal subunit export complex with RAN and XPO1. Interacts with XPO1. Associates with pre-60S ribosomal particles.

Its subcellular location is the cytoplasm. It localises to the nucleus. Acts as an adapter for the XPO1/CRM1-mediated export of the 60S ribosomal subunit. This is 60S ribosomal export protein NMD3 (NMD3) from Homo sapiens (Human).